Reading from the N-terminus, the 369-residue chain is Molybdenum import ATP-binding protein ModC (369 aa).

In terms of domain architecture, ABC transporter spans Pro7–Asp243. Residue Gly41–Thr48 participates in ATP binding. A Mop domain is found at Glu304–Ala369.

The protein belongs to the ABC transporter superfamily. Molybdate importer (TC 3.A.1.8) family. The complex is composed of two ATP-binding proteins (ModC), two transmembrane proteins (ModB) and a solute-binding protein (ModA).

It is found in the cell inner membrane. The enzyme catalyses molybdate(out) + ATP + H2O = molybdate(in) + ADP + phosphate + H(+). In terms of biological role, part of the ABC transporter complex ModABC involved in molybdenum import. Responsible for energy coupling to the transport system. The chain is Molybdenum import ATP-binding protein ModC from Bordetella pertussis (strain Tohama I / ATCC BAA-589 / NCTC 13251).